We begin with the raw amino-acid sequence, 176 residues long: Small ribosomal subunit protein uS5 (176 aa).

Positions 11–74 (LSEVLVDVNR…QAAKKRMMKV (64 aa)) constitute an S5 DRBM domain.

It belongs to the universal ribosomal protein uS5 family. In terms of assembly, part of the 30S ribosomal subunit. Contacts proteins S4 and S8.

Functionally, with S4 and S12 plays an important role in translational accuracy. In terms of biological role, located at the back of the 30S subunit body where it stabilizes the conformation of the head with respect to the body. The sequence is that of Small ribosomal subunit protein uS5 from Rickettsia peacockii (strain Rustic).